Here is a 442-residue protein sequence, read N- to C-terminus: D-aminoacyl-tRNA deacylase (442 aa).

The protein belongs to the DtdA deacylase family. As to quaternary structure, monomer. The cofactor is Zn(2+).

It carries out the reaction a D-aminoacyl-tRNA + H2O = a tRNA + a D-alpha-amino acid + H(+). The enzyme catalyses glycyl-tRNA(Ala) + H2O = tRNA(Ala) + glycine + H(+). In terms of biological role, D-aminoacyl-tRNA deacylase with broad substrate specificity. By recycling D-aminoacyl-tRNA to D-amino acids and free tRNA molecules, this enzyme counteracts the toxicity associated with the formation of D-aminoacyl-tRNA entities in vivo. This Methanospirillum hungatei JF-1 (strain ATCC 27890 / DSM 864 / NBRC 100397 / JF-1) protein is D-aminoacyl-tRNA deacylase.